Reading from the N-terminus, the 537-residue chain is Organic anion transporter 3 (537 aa).

At 1–11 (MTFSEILDRVG) the chain is on the cytoplasmic side. Phosphoserine is present on Ser-4. A helical transmembrane segment spans residues 12–32 (SMGPFQYLHVTLLALPILGIA). The Extracellular segment spans residues 33 to 123 (NHNLLQIFTA…LVCGSNKLKE (91 aa)). An N-linked (GlcNAc...) asparagine glycan is attached at Asn-81. Residues 124–144 (MAQSVFMAGILVGGPVFGELS) form a helical membrane-spanning segment. Residues 145-150 (DRFGRK) are Cytoplasmic-facing. A helical transmembrane segment spans residues 151-171 (PILTWSYLLLAASGSSAAFSP). Over 172 to 176 (SLTVY) the chain is Extracellular. A helical transmembrane segment spans residues 177-197 (MIFRFLCGCSISGISLSTIIL). Topologically, residues 198-212 (NVEWVPTSTRAISST) are cytoplasmic. A helical transmembrane segment spans residues 213–233 (TIGYCYTIGQFILPGLAYAVP). Residues 234 to 236 (QWR) are Extracellular-facing. The helical transmembrane segment at 237–257 (WLQLSVSAAFFIFSLLSWWVP) threads the bilayer. At 258–327 (ESIRWLVLSG…FRVSILRRVT (70 aa)) the chain is on the cytoplasmic side. Residues 328–348 (FCLSLAWFATGFAYYSLAMGV) form a helical membrane-spanning segment. The Extracellular portion of the chain corresponds to 349–354 (EEFGVN). The helical transmembrane segment at 355–375 (IYILQIIFGGVDIPAKFITIL) threads the bilayer. Over 376–383 (SISYLGRR) the chain is Cytoplasmic. A helical membrane pass occupies residues 384–404 (ITQGFLLILAGVAILALIFVS). At 405-411 (SEMQLLR) the chain is on the extracellular side. A helical membrane pass occupies residues 412–432 (TALAVFGKGCLSGSFSCLFLY). The Cytoplasmic segment spans residues 433 to 471 (TSELYPTVLRQTGMGISNIWARVGSMIAPLVKITGELQP). A helical membrane pass occupies residues 472–492 (FIPNVIFGTMTLLGGSAAFFL). Topologically, residues 493–537 (LETLNRPLPETIEDIQDWYQQTKKTKQEPEAEKASQTIPLKTGGP) are extracellular. A disordered region spans residues 513–537 (QTKKTKQEPEAEKASQTIPLKTGGP).

Belongs to the major facilitator (TC 2.A.1) superfamily. Organic cation transporter (TC 2.A.1.19) family. As to expression, expressed mainly in kidney. In kidney, detected in almost all parts of the nephron, including macula densa cells. Expressed (at protein level) throughout the renal cortex. Widely distributed in the brain with no large regional differences. Expressed in the choroid plexus (CP, located in the ventricles of the brain). Expressed in developing bone. Weakly expressed in brain and eye.

The protein localises to the basolateral cell membrane. It catalyses the reaction estrone 3-sulfate(out) + glutarate(in) = estrone 3-sulfate(in) + glutarate(out). It carries out the reaction estrone 3-sulfate(in) + 2-oxoglutarate(out) = estrone 3-sulfate(out) + 2-oxoglutarate(in). The enzyme catalyses taurocholate(out) + glutarate(in) = taurocholate(in) + glutarate(out). The catalysed reaction is dehydroepiandrosterone 3-sulfate(out) + glutarate(in) = dehydroepiandrosterone 3-sulfate(in) + glutarate(out). It catalyses the reaction glutarate(in) + 2-oxoglutarate(out) = glutarate(out) + 2-oxoglutarate(in). It carries out the reaction urate(in) + 2-oxoglutarate(out) = urate(out) + 2-oxoglutarate(in). The enzyme catalyses prostaglandin F2alpha(out) + glutarate(in) = prostaglandin F2alpha(in) + glutarate(out). The catalysed reaction is prostaglandin F2alpha(out) + 2-oxoglutarate(in) = prostaglandin F2alpha(in) + 2-oxoglutarate(out). It catalyses the reaction (R)-carnitine(out) + 2-oxoglutarate(in) = (R)-carnitine(in) + 2-oxoglutarate(out). It carries out the reaction glutarate(in) + (R)-carnitine(out) = glutarate(out) + (R)-carnitine(in). The enzyme catalyses prostaglandin E2(out) + 2-oxoglutarate(in) = prostaglandin E2(in) + 2-oxoglutarate(out). The catalysed reaction is prostaglandin E2(out) + glutarate(in) = prostaglandin E2(in) + glutarate(out). It catalyses the reaction urate(in) + glutarate(out) = urate(out) + glutarate(in). It carries out the reaction taurocholate(out) + 2-oxoglutarate(in) = taurocholate(in) + 2-oxoglutarate(out). The enzyme catalyses dehydroepiandrosterone 3-sulfate(out) + 2-oxoglutarate(in) = dehydroepiandrosterone 3-sulfate(in) + 2-oxoglutarate(out). The catalysed reaction is kynurenate(out) + a dicarboxylate(in) = kynurenate(in) + a dicarboxylate(out). It catalyses the reaction (indol-3-yl)acetate(out) + a dicarboxylate(in) = (indol-3-yl)acetate(in) + a dicarboxylate(out). It carries out the reaction indoxyl sulfate(out) + a dicarboxylate(in) = indoxyl sulfate(in) + a dicarboxylate(out). The enzyme catalyses N-benzoylglycine(out) + a dicarboxylate(in) = N-benzoylglycine(in) + a dicarboxylate(out). The catalysed reaction is 3-carboxy-4-methyl-5-propyl-2-furanpropanoate(out) + a dicarboxylate(in) = 3-carboxy-4-methyl-5-propyl-2-furanpropanoate(in) + a dicarboxylate(out). It catalyses the reaction (6R)-L-erythro-5,6,7,8-tetrahydrobiopterin(out) + a dicarboxylate(in) = (6R)-L-erythro-5,6,7,8-tetrahydrobiopterin(in) + a dicarboxylate(out). It carries out the reaction L-erythro-7,8-dihydrobiopterin(out) + a dicarboxylate(in) = L-erythro-7,8-dihydrobiopterin(in) + a dicarboxylate(out). The enzyme catalyses L-sepiapterin(out) + a dicarboxylate(in) = L-sepiapterin(in) + a dicarboxylate(out). Expression inhibited by androgens such as testosterone. Functionally, functions as an organic anion/dicarboxylate exchanger that couples organic anion uptake indirectly to the sodium gradient. Transports organic anions such as estrone 3-sulfate (E1S) and urate in exchange for dicarboxylates such as glutarate or ketoglutarate (2-oxoglutarate). Plays an important role in the excretion of endogenous and exogenous organic anions, especially from the kidney and the brain. E1S transport is pH- and chloride-dependent and may also involve E1S/cGMP exchange. Responsible for the transport of prostaglandin E2 (PGE2) and prostaglandin F2(alpha) (PGF2(alpha)) in the basolateral side of the renal tubule. Involved in the transport of neuroactive tryptophan metabolites kynurenate and xanthurenate. Functions as a biopterin transporters involved in the uptake and the secretion of coenzymes tetrahydrobiopterin (BH4), dihydrobiopterin (BH2) and sepiapterin to urine, thereby determining baseline levels of blood biopterins. May be involved in the basolateral transport of steviol, a metabolite of the popular sugar substitute stevioside. May participate in the detoxification/ renal excretion of drugs and xenobiotics, such as the histamine H(2)-receptor antagonists fexofenadine and cimetidine, the antibiotic benzylpenicillin (PCG), the anionic herbicide 2,4-dichloro-phenoxyacetate (2,4-D), the diagnostic agent p-aminohippurate (PAH), the antiviral acyclovir (ACV), and the mycotoxin ochratoxin (OTA), by transporting these exogenous organic anions across the cell membrane in exchange for dicarboxylates such as 2-oxoglutarate. May contribute to the release of cortisol in the adrenals. Involved in one of the detoxification systems on the choroid plexus (CP), removes substrates such as E1S or taurocholate (TC), PCG, 2,4-D and PAH, from the cerebrospinal fluid (CSF) to the blood for eventual excretion in urine and bile. Also contributes to the uptake of several other organic compounds such as the prostanoids prostaglandin E(2) and prostaglandin F(2-alpha), L-carnitine, and the therapeutic drugs allopurinol, 6-mercaptopurine (6-MP) and 5-fluorouracil (5-FU). Mediates the transport of PAH, PCG, and the statins pravastatin and pitavastatin, from the cerebrum into the blood circulation across the blood-brain barrier (BBB). Contributes to the renal uptake of potent uremic toxins (indoxyl sulfate (IS), indole acetate (IA), hippurate/N-benzoylglycine (HA) and 3-carboxy-4-methyl-5-propyl-2-furanpropionate (CMPF)), pravastatin, PCG, E1S and dehydroepiandrosterone sulfate (DHEAS), and is partly involved in the renal uptake of temocaprilat (an angiotensin-converting enzyme (ACE) inhibitor). In summary, plays a role in the efflux of drugs and xenobiotics, helping reduce their undesired toxicological effects on the body. The protein is Organic anion transporter 3 (Slc22a8) of Mus musculus (Mouse).